A 286-amino-acid chain; its full sequence is Beta-glucanase (286 aa).

Residues 1-30 form the signal peptide; the sequence is MCTMPLMKLKKMMRRTAFLLSVLIGCSMLG. Residues 48–286 enclose the GH16 domain; it reads FDYSGLPDPE…DYVRVYRWVE (239 aa). The Nucleophile role is filled by glutamate 158. The active-site Proton donor is glutamate 163.

It belongs to the glycosyl hydrolase 16 family.

The catalysed reaction is Hydrolysis of (1-&gt;4)-beta-D-glucosidic linkages in beta-D-glucans containing (1-&gt;3)- and (1-&gt;4)-bonds.. In terms of biological role, shows activity on lichenan, beta-glucan and laminarin but not on CMC cellulose or xylan. This chain is Beta-glucanase (bglA), found in Rhodothermus marinus (Rhodothermus obamensis).